A 464-amino-acid chain; its full sequence is Bifunctional protein GlmU (464 aa).

The interval 1-231 (MDVVIMAAGK…ATQVAGVNSP (231 aa)) is pyrophosphorylase. UDP-N-acetyl-alpha-D-glucosamine-binding positions include Lys-20, Gln-78, 83–84 (GT), 105–107 (SGD), Gly-142, Glu-156, and Asn-229. Residue Asp-107 participates in Mg(2+) binding. Asn-229 serves as a coordination point for Mg(2+). The tract at residues 232–252 (VQLAALERAFQSKVALQLMEQ) is linker. An N-acetyltransferase region spans residues 253 to 464 (GVRLADPARL…SIANWKRPSK (212 aa)). UDP-N-acetyl-alpha-D-glucosamine contacts are provided by Arg-343 and Lys-361. Residue His-373 is the Proton acceptor of the active site. 2 residues coordinate UDP-N-acetyl-alpha-D-glucosamine: Tyr-376 and Asn-387. Acetyl-CoA is bound by residues Ala-390, 396 to 397 (NY), Ser-415, Gly-433, and Arg-450.

The protein in the N-terminal section; belongs to the N-acetylglucosamine-1-phosphate uridyltransferase family. It in the C-terminal section; belongs to the transferase hexapeptide repeat family. As to quaternary structure, homotrimer. The cofactor is Mg(2+).

The protein localises to the cytoplasm. The enzyme catalyses alpha-D-glucosamine 1-phosphate + acetyl-CoA = N-acetyl-alpha-D-glucosamine 1-phosphate + CoA + H(+). The catalysed reaction is N-acetyl-alpha-D-glucosamine 1-phosphate + UTP + H(+) = UDP-N-acetyl-alpha-D-glucosamine + diphosphate. It participates in nucleotide-sugar biosynthesis; UDP-N-acetyl-alpha-D-glucosamine biosynthesis; N-acetyl-alpha-D-glucosamine 1-phosphate from alpha-D-glucosamine 6-phosphate (route II): step 2/2. The protein operates within nucleotide-sugar biosynthesis; UDP-N-acetyl-alpha-D-glucosamine biosynthesis; UDP-N-acetyl-alpha-D-glucosamine from N-acetyl-alpha-D-glucosamine 1-phosphate: step 1/1. It functions in the pathway bacterial outer membrane biogenesis; LPS lipid A biosynthesis. Its function is as follows. Catalyzes the last two sequential reactions in the de novo biosynthetic pathway for UDP-N-acetylglucosamine (UDP-GlcNAc). The C-terminal domain catalyzes the transfer of acetyl group from acetyl coenzyme A to glucosamine-1-phosphate (GlcN-1-P) to produce N-acetylglucosamine-1-phosphate (GlcNAc-1-P), which is converted into UDP-GlcNAc by the transfer of uridine 5-monophosphate (from uridine 5-triphosphate), a reaction catalyzed by the N-terminal domain. The protein is Bifunctional protein GlmU of Albidiferax ferrireducens (strain ATCC BAA-621 / DSM 15236 / T118) (Rhodoferax ferrireducens).